Consider the following 287-residue polypeptide: Ribosomal RNA small subunit methyltransferase A (287 aa).

Asparagine 18, leucine 20, glycine 45, glutamate 66, aspartate 91, and asparagine 118 together coordinate S-adenosyl-L-methionine.

The protein belongs to the class I-like SAM-binding methyltransferase superfamily. rRNA adenine N(6)-methyltransferase family. RsmA subfamily.

The protein resides in the cytoplasm. The enzyme catalyses adenosine(1518)/adenosine(1519) in 16S rRNA + 4 S-adenosyl-L-methionine = N(6)-dimethyladenosine(1518)/N(6)-dimethyladenosine(1519) in 16S rRNA + 4 S-adenosyl-L-homocysteine + 4 H(+). Its function is as follows. Specifically dimethylates two adjacent adenosines (A1518 and A1519) in the loop of a conserved hairpin near the 3'-end of 16S rRNA in the 30S particle. May play a critical role in biogenesis of 30S subunits. The polypeptide is Ribosomal RNA small subunit methyltransferase A (Haemophilus influenzae (strain PittEE)).